Consider the following 185-residue polypeptide: Elongation factor P (185 aa).

Belongs to the elongation factor P family.

The protein localises to the cytoplasm. It functions in the pathway protein biosynthesis; polypeptide chain elongation. In terms of biological role, involved in peptide bond synthesis. Stimulates efficient translation and peptide-bond synthesis on native or reconstituted 70S ribosomes in vitro. Probably functions indirectly by altering the affinity of the ribosome for aminoacyl-tRNA, thus increasing their reactivity as acceptors for peptidyl transferase. This Clostridium botulinum (strain ATCC 19397 / Type A) protein is Elongation factor P.